A 153-amino-acid polypeptide reads, in one-letter code: UPF0756 membrane protein BA_4840/GBAA_4840/BAS4489 (153 aa).

A run of 4 helical transmembrane segments spans residues 8–28, 54–74, 87–107, and 117–137; these read FLFI…TVAI, LGVT…EIGF, WIAL…VQLL, and LVFG…GPLI.

The protein belongs to the UPF0756 family.

Its subcellular location is the cell membrane. In Bacillus anthracis, this protein is UPF0756 membrane protein BA_4840/GBAA_4840/BAS4489.